The chain runs to 333 residues: Cap-specific mRNA (nucleoside-2'-O-)-methyltransferase (333 aa).

Tyr22 contacts mRNA. Gln39, Tyr66, Gly68, Gly72, Asp95, Arg97, Val116, and Asp138 together coordinate S-adenosyl-L-methionine. The tract at residues 169-249 is binding to NPH-I; it reads PVASSLKWRC…NKIVRNKVVI (81 aa). Residue Lys175 is the For methyltransferase activity of the active site. MRNA-binding positions include 177 to 180, Asp182, 205 to 207, and Glu233; these read RCPF and SAE. Basic and acidic residues predominate over residues 305–320; it reads SHEPIQRKISSKDSMS. Residues 305-333 form a disordered region; the sequence is SHEPIQRKISSKDSMSKNRNSKRSVRGNK. A compositionally biased stretch (basic residues) spans 323–333; that stretch reads RNSKRSVRGNK.

The protein belongs to the class I-like SAM-binding methyltransferase superfamily. Poxvirus/kinetoplastid 2'-O-MTase family. As to quaternary structure, interacts with poly(A) polymerase catalytic subunit OPG063. Interacts with OPG109 and OPG123; these interactions might help linking transcription to capping and polyadenylation.

The protein resides in the virion. The catalysed reaction is a 5'-end (N(7)-methyl 5'-triphosphoguanosine)-ribonucleoside in mRNA + S-adenosyl-L-methionine = a 5'-end (N(7)-methyl 5'-triphosphoguanosine)-(2'-O-methyl-ribonucleoside) in mRNA + S-adenosyl-L-homocysteine + H(+). Its function is as follows. Displays methyltransferase, positive regulation of the poly(A) polymerase and transcription elongation activities. Involved in the modification of both mRNA ends and in intermediate and late gene positive transcription elongation. At the mRNAs 5' end, methylates the ribose 2' OH group of the first transcribed nucleotide, thereby producing a 2'-O-methylpurine cap. At the 3' end, functions as a processivity factor which stimulates the activity of the viral poly(A) polymerase OPG063 that creates mRNA's poly(A) tail. In the presence of OPG102, OPG063 does not dissociate from the RNA allowing tail elongation to around 250 adenylates. The sequence is that of Cap-specific mRNA (nucleoside-2'-O-)-methyltransferase (OPG102) from Cynomys gunnisoni (Gunnison's prairie dog).